The following is a 42-amino-acid chain: Iota-conotoxin-like R11.15 (42 aa).

Intrachain disulfides connect cysteine 5-cysteine 19, cysteine 12-cysteine 22, cysteine 18-cysteine 27, and cysteine 21-cysteine 36.

It belongs to the conotoxin I1 superfamily. As to expression, expressed by the venom duct.

It is found in the secreted. Iota-conotoxins bind to voltage-gated sodium channels (Nav) and act as agonists by shifting the voltage-dependence of activation to more hyperpolarized levels. Produces general excitatory symptoms. This chain is Iota-conotoxin-like R11.15, found in Conus radiatus (Rayed cone).